We begin with the raw amino-acid sequence, 709 residues long: F-box only protein 40 (709 aa).

The segment at 53 to 112 (EHQLLCPLEQVPCLNSEYGCPLSMSRHKLAKHLQVCPASVVCCSMEWNRWPNVDSETTLH) adopts a TRAF-type zinc-finger fold. The interval 232-280 (TNSSASCESKNKNDSEKEQISSGHNMVEGEGAPKKKEPQENQKQQDVRT) is disordered. Composition is skewed to basic and acidic residues over residues 240–250 (SKNKNDSEKEQ) and 262–277 (GAPK…KQQD). Residues 570 to 624 (QNSLTSLPLEILKYIAGFLDSVSLAQLSQVSVLMRNICATLLQERGMVLLQWKKK) enclose the F-box domain.

As to quaternary structure, directly interacts with SKP1 and CUL1. In terms of tissue distribution, expressed only in heart and skeletal muscle.

Its subcellular location is the cytoplasm. Functionally, probable substrate-recognition component of the SCF (SKP1-CUL1-F-box protein)-type E3 ubiquitin ligase complex that may function in myogenesis. The chain is F-box only protein 40 (FBXO40) from Homo sapiens (Human).